A 270-amino-acid chain; its full sequence is Imidazole glycerol phosphate synthase subunit HisF (270 aa).

Residues Asp11 and Asp130 contribute to the active site.

It belongs to the HisA/HisF family. Heterodimer of HisH and HisF.

It localises to the cytoplasm. It catalyses the reaction 5-[(5-phospho-1-deoxy-D-ribulos-1-ylimino)methylamino]-1-(5-phospho-beta-D-ribosyl)imidazole-4-carboxamide + L-glutamine = D-erythro-1-(imidazol-4-yl)glycerol 3-phosphate + 5-amino-1-(5-phospho-beta-D-ribosyl)imidazole-4-carboxamide + L-glutamate + H(+). Its pathway is amino-acid biosynthesis; L-histidine biosynthesis; L-histidine from 5-phospho-alpha-D-ribose 1-diphosphate: step 5/9. IGPS catalyzes the conversion of PRFAR and glutamine to IGP, AICAR and glutamate. The HisF subunit catalyzes the cyclization activity that produces IGP and AICAR from PRFAR using the ammonia provided by the HisH subunit. The polypeptide is Imidazole glycerol phosphate synthase subunit HisF (Sorangium cellulosum (strain So ce56) (Polyangium cellulosum (strain So ce56))).